We begin with the raw amino-acid sequence, 153 residues long: Aspartate carbamoyltransferase regulatory chain (153 aa).

Zn(2+) contacts are provided by C109, C114, C138, and C141.

This sequence belongs to the PyrI family. Contains catalytic and regulatory chains. It depends on Zn(2+) as a cofactor.

In terms of biological role, involved in allosteric regulation of aspartate carbamoyltransferase. This Vibrio campbellii (strain ATCC BAA-1116) protein is Aspartate carbamoyltransferase regulatory chain.